We begin with the raw amino-acid sequence, 502 residues long: CBL-interacting protein kinase 11 (502 aa).

The 256-residue stretch at 12–267 (YEVGKQLGQG…IPRIKRSTWY (256 aa)) folds into the Protein kinase domain. Residues 18–26 (LGQGTFAKV) and lysine 41 each bind ATP. Aspartate 135 (proton acceptor) is an active-site residue. The tract at residues 153-182 (DFGLSALAESKRQDGLLHTTCGTPAYVAPE) is activation loop. Residues 297-333 (AECSTSEENQGSLSLPNLNAFDIISLSTGFNLSGFFE) enclose the NAF domain. The interval 339-367 (QEERFTTRQPVTTVLGKLKELAKRLKLKV) is PPI. Residues 447–502 (LQGEQQQSPLPPELPQDQLQPSLPQQEKQDMPEPPLLPQVPQEEVQTSIPAEQTKN) form a disordered region. Over residues 461-472 (PQDQLQPSLPQQ) the composition is skewed to low complexity. The segment covering 493–502 (TSIPAEQTKN) has biased composition (polar residues).

This sequence belongs to the protein kinase superfamily. CAMK Ser/Thr protein kinase family. SNF1 subfamily. The cofactor is Mn(2+).

It carries out the reaction L-seryl-[protein] + ATP = O-phospho-L-seryl-[protein] + ADP + H(+). The enzyme catalyses L-threonyl-[protein] + ATP = O-phospho-L-threonyl-[protein] + ADP + H(+). In terms of biological role, CIPK serine-threonine protein kinases interact with CBL proteins. Binding of a CBL protein to the regulatory NAF domain of CIPK protein lead to the activation of the kinase in a calcium-dependent manner. The protein is CBL-interacting protein kinase 11 (CIPK11) of Oryza sativa subsp. japonica (Rice).